A 180-amino-acid chain; its full sequence is Der GTPase-activating protein YihI (180 aa).

Disordered regions lie at residues 1-88 and 147-180; these read MTRK…KERR and PEVTEEAPVRKGAKTDEDLLDQFENMDLDSFGKE. Basic and acidic residues-rich tracts occupy residues 18-33, 50-67, 77-88, and 153-163; these read FREKSTTQVDVEARKS, EALDPKHYANGQKKDPRL, VEKKPTTKKERR, and APVRKGAKTDE. Positions 164 to 173 are enriched in acidic residues; sequence DLLDQFENMD.

The protein belongs to the YihI family. In terms of assembly, interacts with Der.

Its function is as follows. A GTPase-activating protein (GAP) that modifies Der/EngA GTPase function. May play a role in ribosome biogenesis. The sequence is that of Der GTPase-activating protein YihI from Photobacterium profundum (strain SS9).